Here is a 212-residue protein sequence, read N- to C-terminus: uncharacterized protein (212 aa).

2 disordered regions span residues 1–148 (MEKD…LNDL) and 168–190 (EVVTDAKKEEKPSQMDVEDLSED). Basic and acidic residues predominate over residues 61–70 (KELESEDQGK). A compositionally biased stretch (polar residues) spans 71-85 (DPSSNAEDASCQKNL). Basic and acidic residues-rich tracts occupy residues 99-115 (LGHESGKQDPEREKSDL), 124-144 (EGEHADGGLQEAKEQEAESIK), and 168-180 (EVVTDAKKEEKPS).

This is an uncharacterized protein from Homo sapiens (Human).